The following is a 277-amino-acid chain: Cis-2,3-dihydrobiphenyl-2,3-diol dehydrogenase (277 aa).

9 to 33 (LITGGASGLGRALVDRFVAERAKVA) is an NAD(+) binding site. S142 is a binding site for substrate. The active-site Proton acceptor is the Y155.

Belongs to the short-chain dehydrogenases/reductases (SDR) family. In terms of assembly, homotetramer.

It carries out the reaction (2R,3S)-3-phenylcyclohexa-3,5-diene-1,2-diol + NAD(+) = biphenyl-2,3-diol + NADH + H(+). The protein operates within xenobiotic degradation; biphenyl degradation; 2-hydroxy-2,4-pentadienoate and benzoate from biphenyl: step 2/4. The sequence is that of Cis-2,3-dihydrobiphenyl-2,3-diol dehydrogenase (bphB) from Pseudomonas putida (Arthrobacter siderocapsulatus).